A 164-amino-acid chain; its full sequence is Peptidyl-prolyl cis-trans isomerase A (164 aa).

Met-1 carries the N-acetylmethionine modification. Val-2 bears the N-acetylvaline; in Peptidyl-prolyl cis-trans isomerase A, N-terminally processed mark. A PPIase cyclophilin-type domain is found at 7–163 (FFDIAVDGEP…KKITIANCGQ (157 aa)). Lys-28 is modified (N6-acetyllysine; alternate). Lys-28 participates in a covalent cross-link: Glycyl lysine isopeptide (Lys-Gly) (interchain with G-Cter in SUMO2); alternate. Residue Lys-28 forms a Glycyl lysine isopeptide (Lys-Gly) (interchain with G-Cter in ubiquitin); alternate linkage. Lys-44 and Lys-76 each carry N6-acetyllysine. Residue Ser-77 is modified to Phosphoserine. N6-acetyllysine; alternate is present on Lys-82. Residue Lys-82 forms a Glycyl lysine isopeptide (Lys-Gly) (interchain with G-Cter in SUMO2); alternate linkage. Thr-93 carries the phosphothreonine modification. The N-linked (GlcNAc...) asparagine glycan is linked to Asn-108. Lys-125 and Lys-133 each carry N6-acetyllysine.

The protein belongs to the cyclophilin-type PPIase family. PPIase A subfamily. As to quaternary structure, interacts with protein phosphatase PPP3CA/calcineurin A. Interacts with isoform 2 of BSG/CD147. Interacts with FOXO1; the interaction promotes FOXO1 dephosphorylation, nuclear accumulation and transcriptional activity. Interacts with integrin ITGA2B:ITGB3; the interaction is ROS and peptidyl-prolyl cis-trans isomerase (PPIase) activity-dependent and is increased in the presence of thrombin. Interacts with MAP3K5. Interacts with TARDBP; the interaction is dependent on the RNA-binding activity of TARDBP and the PPIase activity of PPIA/CYPA and the acetylation of PPIA/CYPA at Lys-125 favors the interaction. Interacts with HNRNPA1, HNRNPA2B1, HNRNPC, RBMX, HNRNPK and HNRNPM. Acetylation at Lys-125 markedly inhibits catalysis of cis to trans isomerization. PPIA acetylation also antagonizes the immunosuppressive effects of cyclosporine by inhibiting the sequential steps of cyclosporine binding and calcineurin inhibition. Acetylation at Lys-125 favors the interaction with TARDBP.

It is found in the cytoplasm. The protein localises to the secreted. It localises to the nucleus. The catalysed reaction is [protein]-peptidylproline (omega=180) = [protein]-peptidylproline (omega=0). With respect to regulation, binds cyclosporin A (CsA). CsA mediates some of its effects via an inhibitory action on PPIase. In terms of biological role, catalyzes the cis-trans isomerization of proline imidic peptide bonds in oligopeptides. Exerts a strong chemotactic effect on leukocytes partly through activation of one of its membrane receptors BSG/CD147, initiating a signaling cascade that culminates in MAPK/ERK activation. Activates endothelial cells (ECs) in a proinflammatory manner by stimulating activation of NF-kappa-B and ERK, JNK and p38 MAP-kinases and by inducing expression of adhesion molecules including SELE and VCAM1. Induces apoptosis in ECs by promoting the FOXO1-dependent expression of CCL2 and BCL2L11 which are involved in EC chemotaxis and apoptosis. In response to oxidative stress, initiates proapoptotic and antiapoptotic signaling in ECs via activation of NF-kappa-B and AKT1 and up-regulation of antiapoptotic protein BCL2. Negatively regulates MAP3K5/ASK1 kinase activity, autophosphorylation and oxidative stress-induced apoptosis mediated by MAP3K5/ASK1. Necessary for the assembly of TARDBP in heterogeneous nuclear ribonucleoprotein (hnRNP) complexes and regulates TARDBP binding to RNA UG repeats and TARDBP-dependent expression of HDAC6, ATG7 and VCP which are involved in clearance of protein aggregates. Plays an important role in platelet activation and aggregation. Regulates calcium mobilization and integrin ITGA2B:ITGB3 bidirectional signaling via increased ROS production as well as by facilitating the interaction between integrin and the cell cytoskeleton. Binds heparan sulfate glycosaminoglycans. In Oryctolagus cuniculus (Rabbit), this protein is Peptidyl-prolyl cis-trans isomerase A (PPIA).